We begin with the raw amino-acid sequence, 293 residues long: Homoserine O-acetyltransferase (293 aa).

Cys141 functions as the Acyl-thioester intermediate in the catalytic mechanism. 2 residues coordinate substrate: Lys162 and Ser190. His234 (proton acceptor) is an active-site residue. Glu236 is a catalytic residue. Arg248 serves as a coordination point for substrate.

This sequence belongs to the MetA family.

The protein resides in the cytoplasm. It catalyses the reaction L-homoserine + acetyl-CoA = O-acetyl-L-homoserine + CoA. The protein operates within amino-acid biosynthesis; L-methionine biosynthesis via de novo pathway; O-acetyl-L-homoserine from L-homoserine: step 1/1. Functionally, transfers an acetyl group from acetyl-CoA to L-homoserine, forming acetyl-L-homoserine. The sequence is that of Homoserine O-acetyltransferase from Campylobacter jejuni subsp. jejuni serotype O:2 (strain ATCC 700819 / NCTC 11168).